A 100-amino-acid chain; its full sequence is Integration host factor subunit alpha (100 aa).

The protein belongs to the bacterial histone-like protein family. As to quaternary structure, heterodimer of an alpha and a beta chain.

This protein is one of the two subunits of integration host factor, a specific DNA-binding protein that functions in genetic recombination as well as in transcriptional and translational control. The protein is Integration host factor subunit alpha (ihfA) of Zymomonas mobilis subsp. mobilis (strain ATCC 31821 / ZM4 / CP4).